The sequence spans 702 residues: Phosphatase and actin regulator 4 (702 aa).

Disordered regions lie at residues 1–38 (MEDPFEEADQPATEPGMVMDSVEAGDTTPPTKRKSKFS), 82–194 (GVLL…SSGG), and 222–363 (NLSV…PFPA). Residues 63–88 (EVLERKISMRKPREELVKRGVLLEDP) form an RPEL 1 repeat. The segment covering 106–120 (GHTTPIGNARSSSPV) has biased composition (polar residues). Phosphoserine is present on residues Ser116, Ser118, Ser131, and Ser147. The span at 147–156 (STGSQPNSEA) shows a compositional bias: polar residues. Residues 163 to 173 (VPKPPLLPPKR) are compositionally biased toward pro residues. The segment covering 233–250 (TLPAAPASTNTTATPSLT) has biased composition (low complexity). Phosphoserine occurs at positions 270 and 291. Positions 301 to 318 (PSTSVPTLESAAAITTKT) are enriched in polar residues. Phosphoserine is present on residues Ser342 and Ser344. Over residues 342–362 (SPSPPLPTHIPPEPPRTPPFP) the composition is skewed to pro residues. Thr358 carries the post-translational modification Phosphothreonine. Ser427 bears the Phosphoserine mark. Thr432 carries the phosphothreonine modification. Ser443, Ser453, and Ser464 each carry phosphoserine. Positions 473-536 (KVPDDEEEEE…EEDEDESYQS (64 aa)) are disordered. Positions 486-497 (PSTFSEETTPTS) are enriched in low complexity. Residues 508–518 (EEEEKESDSDS) are compositionally biased toward acidic residues. Residues Ser514, Ser516, Ser557, and Ser590 each carry the phosphoserine modification. RPEL repeat units lie at residues 583-608 (NTLIRRLSQRPTPEELEQRNILQPKN) and 621-646 (RRLTRKLSQRPTVAELLARKILRFNE). A disordered region spans residues 592-615 (RPTPEELEQRNILQPKNEADRQAE). Position 628 is a phosphoserine (Ser628).

Belongs to the phosphatase and actin regulator family. As to quaternary structure, binds PPP1CA and actin.

The protein localises to the cytoplasm. The protein resides in the cell projection. It is found in the lamellipodium. Functionally, regulator of protein phosphatase 1 (PP1) required for neural tube and optic fissure closure, and enteric neural crest cell (ENCCs) migration during development. Acts as an activator of PP1 by interacting with PPP1CA and preventing phosphorylation of PPP1CA at 'Thr-320'. During neural tube closure, localizes to the ventral neural tube and activates PP1, leading to down-regulate cell proliferation within cranial neural tissue and the neural retina. Also acts as a regulator of migration of enteric neural crest cells (ENCCs) by activating PP1, leading to dephosphorylation and subsequent activation of cofilin (COF1 or COF2) and repression of the integrin signaling through the RHO/ROCK pathway. The polypeptide is Phosphatase and actin regulator 4 (PHACTR4) (Pongo abelii (Sumatran orangutan)).